Consider the following 66-residue polypeptide: U-scoloptoxin(24)-Er2a (66 aa).

A signal peptide spans 1–23 (MVKPLHCLIGIVLFLAVLNAGNG). Residues 43 to 66 (SLFHGNQRKKRSEEKRFSDMEQTK) are disordered. Basic and acidic residues predominate over residues 53–66 (RSEEKRFSDMEQTK).

It belongs to the scoloptoxin-24 family. As to expression, expressed by the venom gland.

The protein resides in the secreted. The protein is U-scoloptoxin(24)-Er2a of Ethmostigmus rubripes (Giant centipede).